Reading from the N-terminus, the 507-residue chain is ATP synthase subunit alpha, chloroplastic (507 aa).

170–177 (GDRQTGKA) lines the ATP pocket.

Belongs to the ATPase alpha/beta chains family. F-type ATPases have 2 components, CF(1) - the catalytic core - and CF(0) - the membrane proton channel. CF(1) has five subunits: alpha(3), beta(3), gamma(1), delta(1), epsilon(1). CF(0) has four main subunits: a, b, b' and c.

Its subcellular location is the plastid. It is found in the chloroplast thylakoid membrane. It carries out the reaction ATP + H2O + 4 H(+)(in) = ADP + phosphate + 5 H(+)(out). In terms of biological role, produces ATP from ADP in the presence of a proton gradient across the membrane. The alpha chain is a regulatory subunit. The chain is ATP synthase subunit alpha, chloroplastic from Calycanthus floridus var. glaucus (Eastern sweetshrub).